The primary structure comprises 183 residues: Potassium-transporting ATPase KdpC subunit (183 aa).

Residues 10 to 30 (ASLLVLSLVTGVAYPLLVTGI) traverse the membrane as a helical segment.

It belongs to the KdpC family. In terms of assembly, the system is composed of three essential subunits: KdpA, KdpB and KdpC.

It localises to the cell inner membrane. Functionally, part of the high-affinity ATP-driven potassium transport (or Kdp) system, which catalyzes the hydrolysis of ATP coupled with the electrogenic transport of potassium into the cytoplasm. This subunit acts as a catalytic chaperone that increases the ATP-binding affinity of the ATP-hydrolyzing subunit KdpB by the formation of a transient KdpB/KdpC/ATP ternary complex. This is Potassium-transporting ATPase KdpC subunit from Pseudomonas aeruginosa (strain UCBPP-PA14).